A 482-amino-acid polypeptide reads, in one-letter code: UDP-N-acetylmuramate--L-alanine ligase (482 aa).

Residue 123–129 (GTHGKTT) participates in ATP binding.

The protein belongs to the MurCDEF family.

It localises to the cytoplasm. It catalyses the reaction UDP-N-acetyl-alpha-D-muramate + L-alanine + ATP = UDP-N-acetyl-alpha-D-muramoyl-L-alanine + ADP + phosphate + H(+). It participates in cell wall biogenesis; peptidoglycan biosynthesis. Cell wall formation. The sequence is that of UDP-N-acetylmuramate--L-alanine ligase from Pseudomonas entomophila (strain L48).